The chain runs to 156 residues: Small ribosomal subunit protein uS7 (156 aa).

This sequence belongs to the universal ribosomal protein uS7 family. Part of the 30S ribosomal subunit. Contacts proteins S9 and S11.

One of the primary rRNA binding proteins, it binds directly to 16S rRNA where it nucleates assembly of the head domain of the 30S subunit. Is located at the subunit interface close to the decoding center, probably blocks exit of the E-site tRNA. The chain is Small ribosomal subunit protein uS7 from Nitrosospira multiformis (strain ATCC 25196 / NCIMB 11849 / C 71).